The primary structure comprises 320 residues: SPX domain-containing protein 4 (320 aa).

The 170-residue stretch at 1–170 (MKFGKDFRSH…GGLLSLPFTQ (170 aa)) folds into the SPX domain. Disordered regions lie at residues 209–233 (SSSAKLQPQNDDAASHDPASSVDVE) and 275–320 (CSGA…PRDE). Polar residues predominate over residues 278 to 289 (AITSESDSYSDS). Positions 290-299 (QIEDAEDDDK) are enriched in acidic residues. Positions 304–313 (REQNTAQNAA) are enriched in polar residues.

As to quaternary structure, homodimer. Interacts (via N-terminus) with PHR2 (via C-terminus) in the presence of inositol polyphosphate. Interacts with BHLH6. Post-translationally, degraded under Pi starvation conditions through the ubiquitin/26S proteasome pathway. Widely expressed. Detected in root cells, with the exception of epidermis, and in mesophyll and vascular bundles in leaves.

It localises to the membrane. Its subcellular location is the nucleus. The protein localises to the cytoplasm. Inositol polyphosphate sensor that associates with transcription factors to regulate Pi starvation responses. The SPX domain provides a basic binding surface for inositol polyphosphate signaling molecules. Interacts with PHR2 to inhibit its translocation to the nucleus and repress its DNA-binding activity, and then negatively regulate Pi signaling. In Oryza sativa subsp. japonica (Rice), this protein is SPX domain-containing protein 4.